A 216-amino-acid polypeptide reads, in one-letter code: MQPEQLNQEEESKCPVPPEVRDAWLKSHGGKKPSEVHDTPHPTMLPTEREISTIPKVVTESDSGKEEKWIYPSQQMFFDAMKRKNWNPHPEDMKTIVPIHNAVNERAWQDILQWEQGWGSEKCGGPKLERFDGNVKKLTPKARILNLLGYNKPFDRHDWLVNRCGRKVAYVIDFYNGPTVNGTPSIYLDVRPKLSVHGAWMRVYRWTNEHFSQNSK.

The segment at 1-46 is disordered; sequence MQPEQLNQEEESKCPVPPEVRDAWLKSHGGKKPSEVHDTPHPTMLP.

It belongs to the cytochrome c-type heme lyase family.

It is found in the mitochondrion inner membrane. It carries out the reaction holo-[cytochrome c] = apo-[cytochrome c] + heme b. Lyase that catalyzes the covalent linking of the heme group to the cytochrome C1 apoprotein to produce the mature functional cytochrome. This chain is Putative holocytochrome-c1 synthase, found in Schizosaccharomyces pombe (strain 972 / ATCC 24843) (Fission yeast).